We begin with the raw amino-acid sequence, 503 residues long: MKCPYCSSAQGRCTTTSSGRSITECSSCGRVMEERQTQNHHLFHLRAQDTPLCLVTSDLQTAAQPSPEDEEDPFEPTGFITAFSTWSLEPSPIFARSSLSFSGHLAELERTLELASSTSNSNSSTVVVDNLRAYMQIIDVASILGLDCDISEHAFQLFRDCCSATCLRNRSVEALATACLVQAIREAQEPRTLQEISIAANVQQKEIGKYIKILGEALQLSQPINSNSISVHMPRFCTLLQLNKSAQELATHIGEVVINKCFCTRRNPISISAAAIYLACQLEDKRKTQAEICKITGLTEVTLRKVYKELLENWDDLLPSNYTPAVPPEKAFPTTTISTTRSTTPRAVDPPEPSFVEKDKPSAKPIETFDHTYQQPKGKEDKQPKFRQPWLFGTASVMNPAEMISEPAKPNAMDYEKQQLDKQQQQQLGDKETLPIYLRDHNPFPSNPSPSTGISTINWSFRPSVVPGSSSNLPVIHPPKLPPGYAEIRGSGSRNADNPHGDF.

The TFIIB-type zinc-finger motif lies at 1–33 (MKCPYCSSAQGRCTTTSSGRSITECSSCGRVME). Disordered stretches follow at residues 328 to 366 (PEKA…AKPI), 411 to 431 (NAMD…LGDK), 436 to 455 (IYLR…TGIS), and 468 to 503 (GSSS…HGDF). Low complexity predominate over residues 333–346 (PTTTISTTRSTTPR). A compositionally biased stretch (basic and acidic residues) spans 355–366 (FVEKDKPSAKPI).

Ubiquinated. Subsequent degradation by the proteasome pathway. Widely expressed.

Its subcellular location is the plastid. The protein localises to the chloroplast outer membrane. It is found in the nucleus. Its function is as follows. Plant-specific TFIIB-related protein that may be involved in an intracellular signaling pathway between plastids and the nucleus. May act as general transcription factor (GTF) of RNA polymerase I-dependent transcription and rRNA synthesis. Forms a ternary complex with TBP2 and the rDNA promoter region. The protein is Plant-specific TFIIB-related protein 1 of Arabidopsis thaliana (Mouse-ear cress).